The sequence spans 650 residues: Acetyl-coenzyme A synthetase (650 aa).

CoA is bound by residues 191 to 194 (RGGR), Thr-311, and Asn-335. ATP is bound by residues 387–389 (GEP), 411–416 (DTWWQT), Asp-500, and Arg-515. Ser-523 is a binding site for CoA. Arg-526 serves as a coordination point for ATP. 3 residues coordinate Mg(2+): Val-537, His-539, and Val-542. Arg-584 is a binding site for CoA. An N6-acetyllysine modification is found at Lys-609.

Belongs to the ATP-dependent AMP-binding enzyme family. It depends on Mg(2+) as a cofactor. Acetylated. Deacetylation by the SIR2-homolog deacetylase activates the enzyme.

It catalyses the reaction acetate + ATP + CoA = acetyl-CoA + AMP + diphosphate. Functionally, catalyzes the conversion of acetate into acetyl-CoA (AcCoA), an essential intermediate at the junction of anabolic and catabolic pathways. AcsA undergoes a two-step reaction. In the first half reaction, AcsA combines acetate with ATP to form acetyl-adenylate (AcAMP) intermediate. In the second half reaction, it can then transfer the acetyl group from AcAMP to the sulfhydryl group of CoA, forming the product AcCoA. This chain is Acetyl-coenzyme A synthetase, found in Shewanella amazonensis (strain ATCC BAA-1098 / SB2B).